The primary structure comprises 537 residues: Extracellular exo-inulinase (537 aa).

The signal sequence occupies residues M1–A19. Beta-D-fructose is bound by residues N40 and D41. D41 (nucleophile) is an active-site residue. The N-linked (GlcNAc...) asparagine glycan is linked to N49. 2 residues coordinate beta-D-fructose: Q57 and W65. N67 carries N-linked (GlcNAc...) asparagine glycosylation. S103 contributes to the beta-D-fructose binding site. 2 N-linked (GlcNAc...) asparagine glycosylation sites follow: N111 and N112. 3 residues coordinate beta-D-fructose: R188, D189, and E241. E241 functions as the Proton donor/acceptor in the catalytic mechanism. 2 N-linked (GlcNAc...) asparagine glycosylation sites follow: N254 and N300. Residue W335 participates in beta-D-fructose binding. 2 N-linked (GlcNAc...) asparagine glycosylation sites follow: N398 and N430.

The protein belongs to the glycosyl hydrolase 32 family.

It localises to the secreted. It carries out the reaction Hydrolysis of terminal, non-reducing (2-&gt;1)- and (2-&gt;6)-linked beta-D-fructofuranose residues in fructans.. Exo-inulinase involved in utilization of the plant storage polymer inulin, consisting of fructooligosaccharides with a degree of polymerization (DP) value from 2 to 60. Splits off terminal fructose units successively from the non-reducing end of the inulin molecule, and also hydrolyzes levan, stachyose and raffinose. Hydrolyzes both beta-2,1- as well as beta-2,6-fructosyl linkages in fructooligosaccharides. This chain is Extracellular exo-inulinase, found in Aspergillus awamori (Black koji mold).